Here is a 133-residue protein sequence, read N- to C-terminus: DNA-directed RNA polymerase subunit omega (133 aa).

The protein belongs to the RNA polymerase subunit omega family. In terms of assembly, the RNAP catalytic core consists of 2 alpha, 1 beta, 1 beta' and 1 omega subunit. When a sigma factor is associated with the core the holoenzyme is formed, which can initiate transcription.

It carries out the reaction RNA(n) + a ribonucleoside 5'-triphosphate = RNA(n+1) + diphosphate. Its function is as follows. Promotes RNA polymerase assembly. Latches the N- and C-terminal regions of the beta' subunit thereby facilitating its interaction with the beta and alpha subunits. In Brucella canis (strain ATCC 23365 / NCTC 10854 / RM-666), this protein is DNA-directed RNA polymerase subunit omega.